A 1077-amino-acid chain; its full sequence is Receptor-like protein 1 (1077 aa).

A signal peptide spans 1-38 (MRTDERRRWWVKPKKHITLVFITITMIIQFQMKGCVSC). The segment at 39-120 (VETERMGLLQ…SQTRSLNLSL (82 aa)) is N-cap. The Extracellular segment spans residues 39 to 1024 (VETERMGLLQ…NEEEGNVIDM (986 aa)). Residues asparagine 117, asparagine 131, and asparagine 139 are each glycosylated (N-linked (GlcNAc...) asparagine). LRR repeat units follow at residues 124 to 147 (FPQL…FLGF), 153 to 176 (LDKL…FLNA), 177 to 201 (ATSI…ELSN), 202 to 225 (MTNL…GLTD), 227 to 250 (RDLE…SLST), 251 to 274 (AKLK…GLES), 275 to 299 (LQEL…VLKD), 300 to 324 (LKML…GLEI), 326 to 348 (TSLQ…YLGI), 351 to 376 (LMKL…NLTH), 378 to 397 (RTLD…FVSG), and 399 to 424 (PSVL…LVNQ). A glycan (N-linked (GlcNAc...) asparagine) is linked at asparagine 201. Residue asparagine 240 is glycosylated (N-linked (GlcNAc...) asparagine). Asparagine 289 carries N-linked (GlcNAc...) asparagine glycosylation. Residues asparagine 373, asparagine 390, and asparagine 423 are each glycosylated (N-linked (GlcNAc...) asparagine). Residues 425-449 (TRLTVFKLSSKVGVIQVQTESSWAP) form an LRR 13; degenerate repeat. LRR repeat units follow at residues 450–473 (LFQL…FLVH), 474–498 (QRDL…LVKN), 499–522 (NTRL…ILVH), 524–545 (LQVL…IGMV), 546–570 (FPNL…IGEM), 572–594 (SLQV…FLSG), 595–621 (CYSL…NLTG), 623–643 (VGLF…LLKS), 644–666 (KNLT…WIGR), 667–694 (ISRL…PWVE), 696–713 (MDIS…NVNF), 714–737 (PSLR…LFKA), 739–761 (GLEV…IDQT), 762–785 (SKLR…ICQL), 786–808 (SEVG…CFSK), 877–901 (LRYM…IGDL), 902–925 (QNIR…ISKL), 927–949 (GLES…LADL), and 951–970 (SLGY…PFKG). Residues asparagine 460 and asparagine 498 are each glycosylated (N-linked (GlcNAc...) asparagine). The N-linked (GlcNAc...) asparagine glycan is linked to asparagine 553. 3 N-linked (GlcNAc...) asparagine glycosylation sites follow: asparagine 618, asparagine 631, and asparagine 645. Residues asparagine 749 and asparagine 771 are each glycosylated (N-linked (GlcNAc...) asparagine). Asparagine 908 carries an N-linked (GlcNAc...) asparagine glycan. Asparagine 956 and asparagine 961 each carry an N-linked (GlcNAc...) asparagine glycan. The tract at residues 971-1024 (HLVTFDERSYIGNAHLCGLPTNKNCISQRVPEPPSVSTHAKEEENEEEGNVIDM) is C-cap/acidic domain. A helical transmembrane segment spans residues 1025-1045 (VWFYWTCAAVYISTSLALFAF). Residues 1046–1077 (LYIDSRWSREWFYRVDLCVHHILQFKRSSVCN) lie on the Cytoplasmic side of the membrane.

Belongs to the RLP family.

Its subcellular location is the cell membrane. Its function is as follows. Involved in plant defense. Confers resistance to the bacterial pathogen Xanthomonas through recognition of the microbe-associated molecular pattern (MAMP) eMax. Functionality seems to depend on the presence of the receptor kinase SOBIR1 as an adapter protein. In Arabidopsis thaliana (Mouse-ear cress), this protein is Receptor-like protein 1.